The sequence spans 447 residues: Argininosuccinate synthase (447 aa).

Residues 17–25 (AFSGGLDTS) and Ala43 each bind ATP. An L-citrulline-binding site is contributed by Tyr99. ATP is bound by residues Gly129 and Thr131. The L-aspartate site is built by Thr131, Asn135, and Asp136. Position 135 (Asn135) interacts with L-citrulline. Asp136 contributes to the ATP binding site. L-citrulline is bound by residues Arg139 and Ser192. Asp194 is an ATP binding site. L-citrulline contacts are provided by Thr201, Glu203, and Glu280.

It belongs to the argininosuccinate synthase family. Type 2 subfamily. Homotetramer.

The protein resides in the cytoplasm. It catalyses the reaction L-citrulline + L-aspartate + ATP = 2-(N(omega)-L-arginino)succinate + AMP + diphosphate + H(+). It functions in the pathway amino-acid biosynthesis; L-arginine biosynthesis; L-arginine from L-ornithine and carbamoyl phosphate: step 2/3. This Escherichia coli O139:H28 (strain E24377A / ETEC) protein is Argininosuccinate synthase.